A 66-amino-acid chain; its full sequence is KEGYPVNIYTGCKYSCWLLGENEYCIAECKEIGAGYGYCHGFGCWCEQFPENKPSYPYPEKSCGRK.

Residues 1–64 (KEGYPVNIYT…SYPYPEKSCG (64 aa)) form the LCN-type CS-alpha/beta domain. Cystine bridges form between cysteine 12–cysteine 63, cysteine 16–cysteine 39, cysteine 25–cysteine 44, and cysteine 29–cysteine 46. Cysteine 63 carries the cysteine amide modification. Residues 64–66 (GRK) constitute a propeptide that is removed on maturation.

This sequence belongs to the long (4 C-C) scorpion toxin superfamily. Sodium channel inhibitor family. Beta subfamily. Expressed by the venom gland.

Its subcellular location is the secreted. Beta toxins bind voltage-independently at site-4 of sodium channels (Nav) and shift the voltage of activation toward more negative potentials thereby affecting sodium channel activation and promoting spontaneous and repetitive firing. The polypeptide is Neurotoxin Cex11 (Centruroides exilicauda (Bark scorpion)).